The following is an 82-amino-acid chain: ATP synthase subunit c (82 aa).

2 helical membrane passes run 18–38 and 61–81; these read LGEA…IGKI and IIAA…CGFL.

It belongs to the ATPase C chain family. As to quaternary structure, F-type ATPases have 2 components, F(1) - the catalytic core - and F(0) - the membrane proton channel. F(1) has five subunits: alpha(3), beta(3), gamma(1), delta(1), epsilon(1). F(0) has three main subunits: a(1), b(2) and c(10-14). The alpha and beta chains form an alternating ring which encloses part of the gamma chain. F(1) is attached to F(0) by a central stalk formed by the gamma and epsilon chains, while a peripheral stalk is formed by the delta and b chains.

The protein resides in the cell inner membrane. In terms of biological role, f(1)F(0) ATP synthase produces ATP from ADP in the presence of a proton or sodium gradient. F-type ATPases consist of two structural domains, F(1) containing the extramembraneous catalytic core and F(0) containing the membrane proton channel, linked together by a central stalk and a peripheral stalk. During catalysis, ATP synthesis in the catalytic domain of F(1) is coupled via a rotary mechanism of the central stalk subunits to proton translocation. Its function is as follows. Key component of the F(0) channel; it plays a direct role in translocation across the membrane. A homomeric c-ring of between 10-14 subunits forms the central stalk rotor element with the F(1) delta and epsilon subunits. This chain is ATP synthase subunit c, found in Azobacteroides pseudotrichonymphae genomovar. CFP2.